We begin with the raw amino-acid sequence, 603 residues long: MRRKEKRLLQAVALALAALVLLPNVGLWALYRERQPDGSPGGSGAAVAPEAIQELHSRQKKTLFLGAEQRLKDWHNKEAIRRDAQRVGNGEQGKPYPMTDAERVDQAYRENGFNIYVSDKISLNRSLPDIRHPNCNSKLYLETLPNTSIIIPFHNEGWSSLLRTVHSVLNRSPPELVAEIVLVDDFSDREHLKKPLEDYMALFPSVRILRTKKREGLIRTRMLGASAATGDVITFLDSHCEANVNWLPPLLDRIARNRKTIVCPMIDVIDHDDFRYETQAGDAMRGAFDWEMYYKRIPIPPELQKADPSDPFESPVMAGGLFAVDRKWFWELGGYDPGLEIWGGEQYEISFKVWMCGGRMEDIPCSRVGHIYRKYVPYKVPAGVSLARNLKRVAEVWMDEYAEYIYQRRPEYRHLSAGDVVAQKKLRGSLNCKSFKWFMTKIAWDLPKFYPPVEPPAAAWGEIRNVGTGLCTDTKHGTLGSPLRLETCIRGRGEAAWNSMQVFTFTWREDIRPGDPQHTKKFCFDAVSHTSPVTLYDCHSMKGNQLWKYRKDKTLYHPVSGSCMDCSESDHRIFMNTCNPSSLTQQWLFEHTNSTVLENFNRN.

The Cytoplasmic segment spans residues M1–A11. A helical; Signal-anchor for type II membrane protein membrane pass occupies residues V12 to Y31. Residues R32–N603 lie on the Lumenal side of the membrane. N124 and N146 each carry an N-linked (GlcNAc...) asparagine glycan. 5 disulfide bridges follow: C135-C365, C356-C432, C471-C488, C523-C538, and C563-C578. The tract at residues L144 to R253 is catalytic subdomain A. D185 and R214 together coordinate substrate. Position 237 (D237) interacts with Mn(2+). Residue S238 coordinates substrate. H239 lines the Mn(2+) pocket. Residues P311 to R373 are catalytic subdomain B. Position 342 (W342) interacts with substrate. H370 contributes to the Mn(2+) binding site. Substrate-binding residues include R373 and Y378. The interval R373 to V384 is flexible loop. The Ricin B-type lectin domain occupies A458–E590. N593 carries an N-linked (GlcNAc...) asparagine glycan.

It belongs to the glycosyltransferase 2 family. GalNAc-T subfamily. It depends on Mn(2+) as a cofactor. As to expression, highly expressed in the sublingual gland, testis, small intestine, colon and ovary. Expressed at intermediate level in heart, brain, spleen, lung, stomach, cervix and uterus.

It is found in the golgi apparatus membrane. The enzyme catalyses L-seryl-[protein] + UDP-N-acetyl-alpha-D-galactosamine = a 3-O-[N-acetyl-alpha-D-galactosaminyl]-L-seryl-[protein] + UDP + H(+). The catalysed reaction is L-threonyl-[protein] + UDP-N-acetyl-alpha-D-galactosamine = a 3-O-[N-acetyl-alpha-D-galactosaminyl]-L-threonyl-[protein] + UDP + H(+). Its pathway is protein modification; protein glycosylation. Catalyzes the initial reaction in O-linked oligosaccharide biosynthesis, the transfer of an N-acetyl-D-galactosamine residue to a serine or threonine residue on the protein receptor. Has activity toward Muc5Ac and EA2 peptide substrates. This is Polypeptide N-acetylgalactosaminyltransferase 10 (Galnt10) from Rattus norvegicus (Rat).